The primary structure comprises 677 residues: Methionine--tRNA ligase (677 aa).

Positions 15–25 match the 'HIGH' region motif; the sequence is PYANGSIHLGH. Residues Cys-146, Cys-149, Cys-159, and Cys-162 each coordinate Zn(2+). The 'KMSKS' region signature appears at 333-337; it reads KMSKS. Position 336 (Lys-336) interacts with ATP. The tRNA-binding domain occupies 575 to 677; sequence DFAKVDLRVA…AGAKPGHQVK (103 aa).

The protein belongs to the class-I aminoacyl-tRNA synthetase family. MetG type 1 subfamily. As to quaternary structure, homodimer. Requires Zn(2+) as cofactor.

It is found in the cytoplasm. The enzyme catalyses tRNA(Met) + L-methionine + ATP = L-methionyl-tRNA(Met) + AMP + diphosphate. Is required not only for elongation of protein synthesis but also for the initiation of all mRNA translation through initiator tRNA(fMet) aminoacylation. The chain is Methionine--tRNA ligase from Shigella flexneri serotype 5b (strain 8401).